The following is a 486-amino-acid chain: Probable glycine dehydrogenase (decarboxylating) subunit 2 (486 aa).

Lys269 is modified (N6-(pyridoxal phosphate)lysine).

The protein belongs to the GcvP family. C-terminal subunit subfamily. The glycine cleavage system is composed of four proteins: P, T, L and H. In this organism, the P 'protein' is a heterodimer of two subunits. Pyridoxal 5'-phosphate is required as a cofactor.

It carries out the reaction N(6)-[(R)-lipoyl]-L-lysyl-[glycine-cleavage complex H protein] + glycine + H(+) = N(6)-[(R)-S(8)-aminomethyldihydrolipoyl]-L-lysyl-[glycine-cleavage complex H protein] + CO2. In terms of biological role, the glycine cleavage system catalyzes the degradation of glycine. The P protein binds the alpha-amino group of glycine through its pyridoxal phosphate cofactor; CO(2) is released and the remaining methylamine moiety is then transferred to the lipoamide cofactor of the H protein. In Chlorobium phaeobacteroides (strain DSM 266 / SMG 266 / 2430), this protein is Probable glycine dehydrogenase (decarboxylating) subunit 2.